We begin with the raw amino-acid sequence, 130 residues long: Cysteine methyltransferase (130 aa).

It catalyses the reaction [trehalose-6-phosphate synthase]-L-cysteine + S-adenosyl-L-methionine = [trehalose-6-phosphate synthase]-S-methyl-L-cysteine + S-adenosyl-L-homocysteine + H(+). In terms of biological role, S-adenosyl-L-methionine-dependent protein-cysteine S-methyltransferase with broad substrate specificity. Methylates trehalose-6-phosphate synthase (TPS), enhancing its enzymatic activity and promoting trehalose synthesis upon entry of cells into stationary phase. This is Cysteine methyltransferase from Saccharomyces cerevisiae (Baker's yeast).